The chain runs to 150 residues: 3-dehydroquinate dehydratase (150 aa).

Residue tyrosine 22 is the Proton acceptor of the active site. Substrate is bound by residues asparagine 73, histidine 79, and aspartate 86. Histidine 99 serves as the catalytic Proton donor. Substrate contacts are provided by residues 100 to 101 (LT) and arginine 110.

This sequence belongs to the type-II 3-dehydroquinase family. In terms of assembly, homododecamer.

The catalysed reaction is 3-dehydroquinate = 3-dehydroshikimate + H2O. It functions in the pathway metabolic intermediate biosynthesis; chorismate biosynthesis; chorismate from D-erythrose 4-phosphate and phosphoenolpyruvate: step 3/7. In terms of biological role, catalyzes a trans-dehydration via an enolate intermediate. This chain is 3-dehydroquinate dehydratase, found in Desulforudis audaxviator (strain MP104C).